Here is a 552-residue protein sequence, read N- to C-terminus: Hyaluronan synthase 2 (552 aa).

Topologically, residues 1–11 (MHCERFLCVLR) are cytoplasmic. A helical membrane pass occupies residues 12–32 (IIGTTLFGVSLLLGITAAYIV). Residues 33–45 (GYQFIQTDNYYFS) are Extracellular-facing. Residues 46-66 (FGLYGAFLASHLIIQSLFAFL) form a helical membrane-spanning segment. Over 67–374 (EHRKMKKSLE…NAMWFHKHHL (308 aa)) the chain is Cytoplasmic. T110 carries the phosphothreonine modification. Residue K190 forms a Glycyl lysine isopeptide (Lys-Gly) (interchain with G-Cter in ubiquitin) linkage. S221 carries an O-linked (GlcNAc) serine glycan. T328 is modified (phosphothreonine). A helical transmembrane segment spans residues 375 to 395 (WMTYEAVITGFFPFFLIATVI). Topologically, residues 396–402 (QLFYRGK) are extracellular. The chain crosses the membrane as a helical span at residues 403-423 (IWNILLFLLTVQLVGLIKSSF). Topologically, residues 424-429 (ASCLRG) are cytoplasmic. A helical transmembrane segment spans residues 430–450 (NIVMVFMSLYSVLYMSSLLPA). Residues 451–475 (KMFAIATINKAGWGTSGRKTIVVNF) lie on the Extracellular side of the membrane. A helical membrane pass occupies residues 476 to 496 (IGLIPVSVWFTILLGGVIFTI). The Cytoplasmic portion of the chain corresponds to 497–510 (YKESKKPFSESKQT). The chain crosses the membrane as a helical span at residues 511–531 (VLIVGTLIYACYWVVLLTLYV). The Extracellular portion of the chain corresponds to 532–552 (VLINKCGRRKKGQQYDMVLDV).

This sequence belongs to the NodC/HAS family. As to quaternary structure, homodimer; dimerization promotes enzymatic activity. Forms heterodimer with HAS3. Forms heterodimer with HAS1. It depends on Mg(2+) as a cofactor. Post-translationally, phosphorylation at Thr-328 is essential for hyaluronan synthase activity. O-GlcNAcylation at Ser-221 increases the stability of HAS2 and plasma membrane localization. In terms of processing, ubiquitination at Lys-190; this ubiquitination is essential for hyaluronan synthase activity and homo- or hetero-oligomerization. Can also be poly-ubiquitinated. Deubiquitinated by USP17L22/USP17 and USP4. USP17L22/USP17 efficiently removes 'Lys-63'- and 'Lys-48'-linked polyubiquitin chains, whereas USP4 preferentially removes monoubiquitination and, partially, both 'Lys-63'- and 'Lys-48'-linked polyubiquitin chain.

Its subcellular location is the cell membrane. The protein localises to the endoplasmic reticulum membrane. The protein resides in the vesicle. It localises to the golgi apparatus membrane. It is found in the lysosome. It catalyses the reaction [hyaluronan](n) + UDP-N-acetyl-alpha-D-glucosamine = N-acetyl-beta-D-glucosaminyl-(1-&gt;4)-[hyaluronan](n) + UDP + H(+). The enzyme catalyses N-acetyl-beta-D-glucosaminyl-(1-&gt;4)-[hyaluronan](n) + UDP-alpha-D-glucuronate = [hyaluronan](n+1) + UDP + H(+). It participates in glycan biosynthesis; hyaluronan biosynthesis. Its function is as follows. Catalyzes the addition of GlcNAc or GlcUA monosaccharides to the nascent hyaluronan polymer. Therefore, it is essential to hyaluronan synthesis a major component of most extracellular matrices that has a structural role in tissues architectures and regulates cell adhesion, migration and differentiation. This is one of three isoenzymes responsible for cellular hyaluronan synthesis and it is particularly responsible for the synthesis of high molecular mass hyaluronan. In Rattus norvegicus (Rat), this protein is Hyaluronan synthase 2 (Has2).